A 266-amino-acid polypeptide reads, in one-letter code: Apolipoprotein A-I (266 aa).

The first 18 residues, 1 to 18 (MKAVVLTLAVLFLTGSQA), serve as a signal peptide directing secretion. 2 consecutive repeat copies span residues 67–88 (LKLLDNWDSLSSTVAKLREQIG) and 89–110 (PVTQEFWDNLEKETEVLRQEMN). The 10 X approximate tandem repeats stretch occupies residues 67-266 (LKLLDNWDSL…DEATKKLNAQ (200 aa)). Met109 carries the methionine sulfoxide modification. A 3; half-length repeat occupies 111 to 121 (KDLEEVKKKVQ). Repeat copies occupy residues 122 to 143 (PYLDEFQSKWHEEVELYRQKVA), 144 to 165 (PLGAELREGARQKLQELQEKLS), 166 to 187 (PLGEELRDRARTHVDALRAQLA), 188 to 209 (PYSEQLRERLAARLQALKEGGG), and 210 to 231 (ATLTEYHAKASEHLSALREKAK). One copy of the 9; half-length repeat lies at 232 to 242 (PALEDLRQGLM). Copy 10 of the repeat occupies 243–266 (PVLESFRASLLAAVDEATKKLNAQ).

Belongs to the apolipoprotein A1/A4/E family. As to quaternary structure, homodimer. Interacts with APOA1BP and CLU. Component of a sperm activating protein complex (SPAP), consisting of APOA1, an immunoglobulin heavy chain, an immunoglobulin light chain and albumin. Interacts with NDRG1. Interacts with SCGB3A2. Interacts with NAXE and YJEFN3. Glycosylated. In terms of processing, palmitoylated. Post-translationally, phosphorylation sites are present in the extracellular medium.

It is found in the secreted. In terms of biological role, participates in the reverse transport of cholesterol from tissues to the liver for excretion by promoting cholesterol efflux from tissues and by acting as a cofactor for the lecithin cholesterol acyltransferase (LCAT). As part of the SPAP complex, activates spermatozoa motility. This chain is Apolipoprotein A-I (APOA1), found in Phoca vitulina (Harbor seal).